A 370-amino-acid polypeptide reads, in one-letter code: 3-dehydroquinate synthase (370 aa).

NAD(+) is bound by residues Gly112–Asp116, Thr136–Thr137, Lys149, Lys158, and Thr176–Thr179. 3 residues coordinate Zn(2+): Glu191, His254, and His276.

This sequence belongs to the sugar phosphate cyclases superfamily. Dehydroquinate synthase family. It depends on Co(2+) as a cofactor. Zn(2+) is required as a cofactor. The cofactor is NAD(+).

The protein localises to the cytoplasm. The enzyme catalyses 7-phospho-2-dehydro-3-deoxy-D-arabino-heptonate = 3-dehydroquinate + phosphate. Its pathway is metabolic intermediate biosynthesis; chorismate biosynthesis; chorismate from D-erythrose 4-phosphate and phosphoenolpyruvate: step 2/7. Functionally, catalyzes the conversion of 3-deoxy-D-arabino-heptulosonate 7-phosphate (DAHP) to dehydroquinate (DHQ). The chain is 3-dehydroquinate synthase from Xylella fastidiosa (strain M23).